The primary structure comprises 54 residues: MEISLLNIIACPLCQGQLLLQEQELVCQIDALAYPVRTNIPVLLVSEARNILVK.

This sequence belongs to the UPF0434 family.

The polypeptide is UPF0434 protein BCI_0256 (Baumannia cicadellinicola subsp. Homalodisca coagulata).